Here is a 349-residue protein sequence, read N- to C-terminus: Hydroxymethylglutaryl-CoA synthase (349 aa).

2 residues coordinate (3S)-3-hydroxy-3-methylglutaryl-CoA: D29 and A30. E81 serves as the catalytic Proton donor/acceptor. (3S)-3-hydroxy-3-methylglutaryl-CoA is bound by residues C113, T154, T202, and H235. C113 functions as the Acyl-thioester intermediate in the catalytic mechanism. The Proton donor/acceptor role is filled by H235. R240 is a CoA binding site. (3S)-3-hydroxy-3-methylglutaryl-CoA contacts are provided by R244, N267, and S297.

It belongs to the thiolase-like superfamily. Archaeal HMG-CoA synthase family. In terms of assembly, interacts with acetoacetyl-CoA thiolase that catalyzes the precedent step in the pathway and with a DUF35 protein. The acetoacetyl-CoA thiolase/HMG-CoA synthase complex channels the intermediate via a fused CoA-binding site, which allows for efficient coupling of the endergonic thiolase reaction with the exergonic HMGCS reaction.

It carries out the reaction acetoacetyl-CoA + acetyl-CoA + H2O = (3S)-3-hydroxy-3-methylglutaryl-CoA + CoA + H(+). Its pathway is metabolic intermediate biosynthesis; (R)-mevalonate biosynthesis; (R)-mevalonate from acetyl-CoA: step 2/3. Catalyzes the condensation of acetyl-CoA with acetoacetyl-CoA to form 3-hydroxy-3-methylglutaryl-CoA (HMG-CoA). Functions in the mevalonate (MVA) pathway leading to isopentenyl diphosphate (IPP), a key precursor for the biosynthesis of isoprenoid compounds that are building blocks of archaeal membrane lipids. The chain is Hydroxymethylglutaryl-CoA synthase from Caldivirga maquilingensis (strain ATCC 700844 / DSM 13496 / JCM 10307 / IC-167).